Reading from the N-terminus, the 435-residue chain is BAHD acyltransferase BIA1 (435 aa).

Active-site proton acceptor residues include His-151 and Asp-369.

This sequence belongs to the plant acyltransferase family. In terms of tissue distribution, mostly expressed in roots (particularly in the root elongation zone), and, to a lower extent, in seedling, leaves (especially in hydathodes), siliques (e.g. in developing seeds) and flowers.

The protein localises to the cytoplasm. Its function is as follows. Monitors brassinosteroids (BR) responses and homeostasis, particularly in the root and hypocotyl in darkness. Promotes flavonoid biosynthesis. The chain is BAHD acyltransferase BIA1 from Arabidopsis thaliana (Mouse-ear cress).